A 112-amino-acid polypeptide reads, in one-letter code: Small ribosomal subunit protein bS6 (112 aa).

Belongs to the bacterial ribosomal protein bS6 family.

Functionally, binds together with bS18 to 16S ribosomal RNA. This Chlamydia abortus (strain DSM 27085 / S26/3) (Chlamydophila abortus) protein is Small ribosomal subunit protein bS6.